The following is a 92-amino-acid chain: UPF0473 protein Cbei_1107 (92 aa).

This sequence belongs to the UPF0473 family.

This Clostridium beijerinckii (strain ATCC 51743 / NCIMB 8052) (Clostridium acetobutylicum) protein is UPF0473 protein Cbei_1107.